The chain runs to 385 residues: Putative F-box protein At1g49610 (385 aa).

One can recognise an F-box domain in the interval 25–73 (VDSISSLPDVILQENLSLIPTKFAIRTSVLSKRWRHVWSETPSLDFDDC).

The chain is Putative F-box protein At1g49610 from Arabidopsis thaliana (Mouse-ear cress).